Reading from the N-terminus, the 271-residue chain is tRNA (guanine-N(1)-)-methyltransferase (271 aa).

S-adenosyl-L-methionine-binding positions include Gly-120 and 145 to 150 (IGDYVL).

Belongs to the RNA methyltransferase TrmD family. In terms of assembly, homodimer.

It localises to the cytoplasm. It catalyses the reaction guanosine(37) in tRNA + S-adenosyl-L-methionine = N(1)-methylguanosine(37) in tRNA + S-adenosyl-L-homocysteine + H(+). Functionally, specifically methylates guanosine-37 in various tRNAs. The chain is tRNA (guanine-N(1)-)-methyltransferase from Bifidobacterium longum (strain NCC 2705).